The following is a 275-amino-acid chain: Putative ABC transporter permease protein ORF2 (275 aa).

6 consecutive transmembrane segments (helical) span residues 11-31, 74-94, 108-128, 136-156, 185-205, and 239-259; these read YFIFLAVWTLIADVPFLFMLF, IAVSISVVLILIISSMAAFAF, LIIAGMAIPIHVTLIPIYVLT, TVFALIGPYVALSLPMSIFIL, ILLPLSAPALITVGIYNGTYL, and IPAIMAFLTLSLLPMLIAYIF. The ABC transmembrane type-1 domain occupies 69–260; that stretch reads LKNSVIAVSI…LPMLIAYIFG (192 aa).

Belongs to the binding-protein-dependent transport system permease family. MalFG subfamily.

Its subcellular location is the cell membrane. The sequence is that of Putative ABC transporter permease protein ORF2 from Caldicellulosiruptor sp. (strain Rt8B.4).